Here is a 141-residue protein sequence, read N- to C-terminus: uncharacterized protein (141 aa).

Residues 13–35 (PVIGVILMVAITVILAAVIASFV) form a helical membrane-spanning segment.

The protein resides in the membrane. This is an uncharacterized protein from Archaeoglobus fulgidus (strain ATCC 49558 / DSM 4304 / JCM 9628 / NBRC 100126 / VC-16).